The sequence spans 313 residues: Porphobilinogen deaminase (313 aa).

Cys242 bears the S-(dipyrrolylmethanemethyl)cysteine mark.

It belongs to the HMBS family. In terms of assembly, monomer. The cofactor is dipyrromethane.

The enzyme catalyses 4 porphobilinogen + H2O = hydroxymethylbilane + 4 NH4(+). Its pathway is porphyrin-containing compound metabolism; protoporphyrin-IX biosynthesis; coproporphyrinogen-III from 5-aminolevulinate: step 2/4. Tetrapolymerization of the monopyrrole PBG into the hydroxymethylbilane pre-uroporphyrinogen in several discrete steps. The sequence is that of Porphobilinogen deaminase from Pectobacterium carotovorum subsp. carotovorum (strain PC1).